A 152-amino-acid chain; its full sequence is Superoxide dismutase [Cu-Zn] 1 (152 aa).

Positions 45, 47, and 62 each coordinate Cu cation. The cysteines at positions 56 and 145 are disulfide-linked. Zn(2+) is bound by residues H62, H70, H79, and D82. H119 contributes to the Cu cation binding site.

It belongs to the Cu-Zn superoxide dismutase family. Homodimer. Cu cation is required as a cofactor. Zn(2+) serves as cofactor.

It is found in the cytoplasm. The enzyme catalyses 2 superoxide + 2 H(+) = H2O2 + O2. Destroys radicals which are normally produced within the cells and which are toxic to biological systems. The polypeptide is Superoxide dismutase [Cu-Zn] 1 (SODCC.1) (Mesembryanthemum crystallinum (Common ice plant)).